The primary structure comprises 244 residues: DNA repair protein RecO (244 aa).

The protein belongs to the RecO family.

Involved in DNA repair and RecF pathway recombination. This chain is DNA repair protein RecO, found in Caldicellulosiruptor bescii (strain ATCC BAA-1888 / DSM 6725 / KCTC 15123 / Z-1320) (Anaerocellum thermophilum).